The following is a 165-amino-acid chain: Type 3 secretion system regulator YopR (165 aa).

Belongs to the YopR family.

It is found in the secreted. May be involved in the regulation of the assembly of the type III secretion system (T3SS), also called injectisome, which is used to inject bacterial effector proteins into eukaryotic host cells. May control the secretion and/or polymerization of YscF/SctF, the principal component of the needle filament, thereby impacting the assembly of the T3SS. Involved in pathogenesis. In Yersinia pseudotuberculosis serotype I (strain IP32953), this protein is Type 3 secretion system regulator YopR.